A 589-amino-acid chain; its full sequence is Transcription factor MYC4 (589 aa).

Positions 99-150 (NTVLLGWGDGYYKGEEEKSRKKKSNPASAAEQEHRKRVIRELNSLISGGVGG) are JAZ-interaction domain. Disordered regions lie at residues 114 to 133 (EEKS…QEHR), 291 to 326 (AAPV…PNPK), 340 to 359 (IENG…VSNN), and 381 to 422 (ASVA…EAER). Positions 296 to 308 (NNGGNDSTSNSDS) are enriched in low complexity. Over residues 309–322 (QPISKLCNGSSVEN) the composition is skewed to polar residues. The segment covering 381-398 (ASVAKEAESNRVVVEPEK) has biased composition (basic and acidic residues). The span at 399-408 (KPRKRGRKPA) shows a compositional bias: basic residues. Residues 409 to 422 (NGREEPLNHVEAER) show a composition bias toward basic and acidic residues. A bHLH domain is found at 412–461 (EEPLNHVEAERQRREKLNQRFYSLRAVVPNVSKMDKASLLGDAISYISEL).

In terms of assembly, homo- and heterodimer. Interacts with MYB28, MYB29, MYB34, MYB51, MYB76, MYB122, MYC3, AFPH2/NINJA and the JAZ repressors TIFY10A/JAZ1, TIFY10B/JAZ2, TIFY6B/JAZ3, TIFY6A/JAZ4, TIFY11A/JAZ5, TIFY11B/JAZ6, TIFY5B/JAZ7, TIFY5A/JAZ8, TIFY7/JAZ9, TIFY9/JAZ10, TIFY3A/JAZ11 and TIFY3B/JAZ12. As to expression, expressed constitutively at low levels. Preferentially expressed in vascular tissues.

The protein localises to the nucleus. In terms of biological role, transcription factor involved in jasmonic acid (JA) gene regulation. With MYC2 and MYC3, controls additively subsets of JA-dependent responses. Can form complexes with all known glucosinolate-related MYBs to regulate glucosinolate biosynthesis. Binds to the G-box (5'-CACGTG-3') of promoters. Activates multiple TIFY/JAZ promoters. The polypeptide is Transcription factor MYC4 (MYC4) (Arabidopsis thaliana (Mouse-ear cress)).